The following is a 768-amino-acid chain: Telomere repeats-binding bouquet formation protein 1 (768 aa).

ARM repeat units lie at residues 101 to 145 and 341 to 384; these read ELFQ…REVG and NGLP…GQNS. A coiled-coil region spans residues 399-448; it reads ETLREHWKAAKEILCRIKQFEKGGKEEKQQNRSGHYKDNTPSMKVNIQTN. Composition is skewed to basic and acidic residues over residues 422–436 and 461–475; these read GKEE…HYKD and RAED…ELRS. 2 disordered regions span residues 422–441 and 454–475; these read GKEE…TPSM and ADST…ELRS. The tract at residues 524 to 700 is interaction with TERF1; sequence QNLDKEKTFD…EAMERRSPVP (177 aa). At threonine 648 the chain carries Phosphothreonine. Residues 707 to 760 enclose the Myb-like domain; it reads KKRRIRKDFTKEEVNYLFHGVKTMGNHWNSILWSFPFQKGRRAVDLAHKYHRLI.

It belongs to the TERB1 family. As to quaternary structure, component of the MAJIN-TERB1-TERB2 complex, composed of MAJIN, TERB1 and TERB2. Interacts with TERF1, STAG3 and SUN1. Interacts (via Myb-like domain) with the cohesin complex; probably mediated via interaction with STAG3. Phosphorylated by CDK. Phosphorylation by CDK takes place in late prophase when the cap exchange is prominent. is important for the stabilization of telomere attachment but dispenable for the cap exchange. In terms of tissue distribution, expressed in testis and fetal oocytes.

Its subcellular location is the chromosome. The protein localises to the telomere. It is found in the nucleus inner membrane. Its function is as follows. Meiosis-specific telomere-associated protein involved in meiotic telomere attachment to the nucleus inner membrane, a crucial step for homologous pairing and synapsis. Component of the MAJIN-TERB1-TERB2 complex, which promotes telomere cap exchange by mediating attachment of telomeric DNA to the inner nuclear membrane and replacement of the protective cap of telomeric chromosomes: in early meiosis, the MAJIN-TERB1-TERB2 complex associates with telomeric DNA and the shelterin/telosome complex. During prophase, the complex matures and promotes release of the shelterin/telosome complex from telomeric DNA. In the MAJIN-TERB1-TERB2 complex, TERB1 probably mediates association with the shelterin/telosome complex via interaction with TERF1, promoting priming telomeric DNA attachment'. Promotes telomere association with the nuclear envelope and deposition of the SUN-KASH/LINC complex. Also recruits cohesin to telomeres to develop structural rigidity. The polypeptide is Telomere repeats-binding bouquet formation protein 1 (Mus musculus (Mouse)).